We begin with the raw amino-acid sequence, 268 residues long: Undecaprenyl-diphosphatase 1 (268 aa).

The next 7 helical transmembrane spans lie at serine 5–serine 25, glycine 43–phenylalanine 63, leucine 84–isoleucine 104, valine 107–leucine 127, alanine 184–leucine 204, leucine 218–leucine 238, and alanine 247–isoleucine 267.

The protein belongs to the UppP family.

The protein localises to the cell inner membrane. The catalysed reaction is di-trans,octa-cis-undecaprenyl diphosphate + H2O = di-trans,octa-cis-undecaprenyl phosphate + phosphate + H(+). Its function is as follows. Catalyzes the dephosphorylation of undecaprenyl diphosphate (UPP). Confers resistance to bacitracin. The protein is Undecaprenyl-diphosphatase 1 of Agrobacterium fabrum (strain C58 / ATCC 33970) (Agrobacterium tumefaciens (strain C58)).